The chain runs to 270 residues: uncharacterized protein (270 aa).

2 disordered regions span residues 35–67 (IKQD…GGNK) and 168–204 (SNNN…DNSN). The segment covering 39-48 (NNNNNNNNTN) has biased composition (low complexity). Residues 49-67 (VSLSPSIKSQATSSTGGNK) are compositionally biased toward polar residues. Over residues 168-191 (SNNNNNNNNNNNNNNNNNNNNNNN) the composition is skewed to low complexity.

This is an uncharacterized protein from Dictyostelium discoideum (Social amoeba).